Consider the following 306-residue polypeptide: Ornithine carbamoyltransferase (306 aa).

Carbamoyl phosphate contacts are provided by residues 51–54 (STRT), glutamine 78, arginine 102, and 129–132 (HPCQ). L-ornithine contacts are provided by residues asparagine 160, aspartate 223, and 227–228 (SM). Residues 263 to 264 (CL) and arginine 291 each bind carbamoyl phosphate.

The protein belongs to the aspartate/ornithine carbamoyltransferase superfamily. OTCase family.

Its subcellular location is the cytoplasm. The enzyme catalyses carbamoyl phosphate + L-ornithine = L-citrulline + phosphate + H(+). Its pathway is amino-acid biosynthesis; L-arginine biosynthesis; L-arginine from L-ornithine and carbamoyl phosphate: step 1/3. In terms of biological role, reversibly catalyzes the transfer of the carbamoyl group from carbamoyl phosphate (CP) to the N(epsilon) atom of ornithine (ORN) to produce L-citrulline. The polypeptide is Ornithine carbamoyltransferase (argF) (Nostoc punctiforme (strain ATCC 29133 / PCC 73102)).